We begin with the raw amino-acid sequence, 96 residues long: Large ribosomal subunit protein bL21 (96 aa).

The protein belongs to the bacterial ribosomal protein bL21 family. As to quaternary structure, part of the 50S ribosomal subunit. Contacts protein L20.

Functionally, this protein binds to 23S rRNA in the presence of protein L20. The sequence is that of Large ribosomal subunit protein bL21 from Sulfurihydrogenibium sp. (strain YO3AOP1).